The following is a 323-amino-acid chain: MKVNSKTLQSVKEDLLNIEQTLNKLIKVNNPILSAAAKHLLIVESKKIRPAIVLLVAKAIDKNKKIKTSQQRLAEVTEIIHTATLLHDDVVDESIIRRGTKSVNKTFGNKIAVFAGDFLFAQSSWYLANINNLEVVKAISKVITDLAEGELQQNLTQFNTYYSIIKYLEKSFNKTASLIAASCKSCCLLSDFDQSLNSKFYNYGKNLGLAFQIIDDILDITSSSTALGKMTTSDLKLGNLTAPVLFALTKNSKLFKIIEREFCEKSDISEAINIIKETNAIEESFDLAYEHIEAAINSIKDLPTSSEKDSLIEIAYDLLNRYK.

3 residues coordinate isopentenyl diphosphate: K46, R49, and H81. Mg(2+) is bound by residues D88 and D92. R97 is an an all-trans-polyprenyl diphosphate binding site. R98 contributes to the isopentenyl diphosphate binding site. An all-trans-polyprenyl diphosphate-binding residues include K174, T175, and Q212.

Belongs to the FPP/GGPP synthase family. Mg(2+) is required as a cofactor.

The protein resides in the plastid. The protein localises to the chloroplast. Possible role in synthesis of the nonaprenyl side chain of plastoquinone or in synthesis of other prenyl chains such as undekaprenyl pyrophosphate. In Cyanidium caldarium (Red alga), this protein is Prenyl transferase (preA).